A 294-amino-acid polypeptide reads, in one-letter code: Protease HtpX (294 aa).

2 helical membrane-spanning segments follow: residues 4 to 24 (ILLFILTNLSVMIIFGIILFI) and 33 to 53 (FGLIIMSGVFGFGGSIISLLL). H139 contributes to the Zn(2+) binding site. E140 is an active-site residue. Residue H143 participates in Zn(2+) binding. Helical transmembrane passes span 147 to 167 (GDMITMTLIQGVVNTFVIFLS) and 197 to 217 (FFISMALEVVFGILASIITFW). E223 serves as a coordination point for Zn(2+).

It belongs to the peptidase M48B family. The cofactor is Zn(2+).

Its subcellular location is the cell membrane. The sequence is that of Protease HtpX from Wigglesworthia glossinidia brevipalpis.